A 31-amino-acid polypeptide reads, in one-letter code: Dermaseptin-7.2TR (31 aa).

Glutamic acid 1-amide is present on Glu31.

As to expression, expressed by the skin glands.

It localises to the secreted. Its function is as follows. Has antimicrobial activity. This is Dermaseptin-7.2TR from Phyllomedusa trinitatis (Trinidad leaf frog).